The primary structure comprises 189 residues: Selenoprotein S (189 aa).

Residues 29 to 49 form a helical membrane-spanning segment; sequence VVLSSYGWYILLGCILIYLLI. A compositionally biased stretch (basic and acidic residues) spans 114-125; sequence IETWDRMKEGKS. The segment at 114–189 is disordered; that stretch reads IETWDRMKEG…RRGPSSGGUG (76 aa). Low complexity predominate over residues 136–147; sequence PSPSTSTSAATK. Over residues 148–157 the composition is skewed to basic and acidic residues; sequence PKQEKQERKT. A non-standard amino acid (selenocysteine) is located at residue U188.

The protein belongs to the selenoprotein S family.

It is found in the endoplasmic reticulum membrane. Its subcellular location is the cytoplasm. Involved in the degradation process of misfolded endoplasmic reticulum (ER) luminal proteins. Participates in the transfer of misfolded proteins from the ER to the cytosol, where they are destroyed by the proteasome in a ubiquitin-dependent manner. This is Selenoprotein S (vimp) from Xenopus tropicalis (Western clawed frog).